The sequence spans 90 residues: Small ribosomal subunit protein bS20 (90 aa).

This sequence belongs to the bacterial ribosomal protein bS20 family.

Binds directly to 16S ribosomal RNA. This Rickettsia felis (strain ATCC VR-1525 / URRWXCal2) (Rickettsia azadi) protein is Small ribosomal subunit protein bS20.